Reading from the N-terminus, the 664-residue chain is MRGCLQLARWLSAGPKCPAASLPKAPSGLYNTIRSFTSSAQLASRARAASKPASDLETRIAQIPIDRYRNFCIVAHVDHGKSTLSDRLLELTGTIQPGSNKQVLDKLDVERERGITVKAQTCTMIYNHNGEDYLLHLVDTPGHVDFRAEVSRSYASCGGALLLVDASQGIQAQTVANFYLAFAQGLELIPVINKVDLPSAEPEKALQQMKTSFELDTENAVMVSAKTGLNVEQLLPTVVEKIPAPVGDTQKPLRMLLVDSWYDSYKGVICLVRIFDGEVRAGDQLVSFATGIKYYVGEVGIMYPTETSQTVLRAGQVGYIFFNPGMKRSQEAKIGDTYTKVGSEKAVEPLPGFEEPKAMVFVAAYPVDADHFEHLEDSINQLMLNDRSITVQKESSEALGAGFRLGFLGTLHCSVFEDRLRQEHGASIIITPPSVPVKVMWKDGREEIVTSPARFPEEDDLRSKVAEIHEPYVLATLTFPDEYLGKVIELCEANRGVQQTLEYFTSTQVILKYELPLAQLVDDFFGKLKGSTKGYATLDYEESAWQPSNIVKLQLLVNKAPVDAVARVVHYSQIERLGRKWVTKFKQHVDRQLFEVVIQAAVGRKVIARETVKPYRKDVLAKLHASDVSRRRKLLEKQKEGRKRLRAVGNVVIEQKAFQNFLAK.

The N-terminal 43 residues, 1–43 (MRGCLQLARWLSAGPKCPAASLPKAPSGLYNTIRSFTSSAQLA), are a transit peptide targeting the mitochondrion. The 181-residue stretch at 66–246 (DRYRNFCIVA…TVVEKIPAPV (181 aa)) folds into the tr-type G domain. GTP is bound by residues 75-82 (AHVDHGKS), 139-143 (DTPGH), and 193-196 (NKVD).

This sequence belongs to the TRAFAC class translation factor GTPase superfamily. Classic translation factor GTPase family. LepA subfamily.

The protein localises to the mitochondrion inner membrane. The catalysed reaction is GTP + H2O = GDP + phosphate + H(+). In terms of biological role, promotes mitochondrial protein synthesis. May act as a fidelity factor of the translation reaction, by catalyzing a one-codon backward translocation of tRNAs on improperly translocated ribosomes. Binds to mitochondrial ribosomes in a GTP-dependent manner. This chain is Translation factor guf1, mitochondrial (guf1), found in Aspergillus oryzae (strain ATCC 42149 / RIB 40) (Yellow koji mold).